The primary structure comprises 1418 residues: JmjC domain-containing histone demethylation protein 1 (1418 aa).

3 disordered regions span residues 1-86 (MIGA…SSST), 102-162 (APLS…STFD), and 308-329 (GADRASLDVPPRGDDDTESDEN). Residues 44 to 60 (WIDRGDSQAASYDRDRV) show a composition bias toward basic and acidic residues. The segment covering 61 to 71 (TSNNDVYSSTN) has biased composition (polar residues). Positions 127–139 (STERPAKRPRSEK) are enriched in basic and acidic residues. Positions 143-162 (PLHQPQTTVAPDANPSSTFD) are enriched in polar residues. Residues 308–321 (GADRASLDVPPRGD) are compositionally biased toward basic and acidic residues. A PHD-type zinc finger spans residues 331 to 391 (QANCAACNLV…KFICRRCRPI (61 aa)). The JmjC domain occupies 588–746 (VSQSKLGKLI…MQIKVAKIEK (159 aa)). A substrate-binding site is contributed by threonine 639. Positions 642 and 644 each coordinate Fe cation. Lysine 659 contacts substrate. Histidine 714 provides a ligand contact to Fe cation. 4 disordered regions span residues 891-964 (PQWT…TVEI), 1090-1118 (NAATSKVHDGSPEGLNTGKKGRSKACDDC), 1130-1195 (YGRI…HTQR), and 1250-1394 (KPTA…DEPD). Basic and acidic residues predominate over residues 907–925 (LTEKKPAGRPSRRSERNAE). 2 stretches are compositionally biased toward basic and acidic residues: residues 1130–1143 (YGRIDPIKAQERSK) and 1186–1195 (AEGDMSHTQR). The segment covering 1250 to 1263 (KPTASLVSPPTSQA) has biased composition (polar residues). A compositionally biased stretch (low complexity) spans 1341 to 1352 (SSKKPASRPSSS).

This sequence belongs to the JHDM1 histone demethylase family. Fe(2+) serves as cofactor.

It localises to the nucleus. It catalyses the reaction N(6),N(6)-dimethyl-L-lysyl(36)-[histone H3] + 2 2-oxoglutarate + 2 O2 = L-lysyl(36)-[histone H3] + 2 formaldehyde + 2 succinate + 2 CO2. Histone demethylase that specifically demethylates 'Lys-36' of histone H3, thereby playing a central role in histone code. The chain is JmjC domain-containing histone demethylation protein 1 (jhd1) from Aspergillus fumigatus (strain ATCC MYA-4609 / CBS 101355 / FGSC A1100 / Af293) (Neosartorya fumigata).